Consider the following 822-residue polypeptide: Molybdenum cofactor sulfurase (822 aa).

Lys245 carries the N6-(pyridoxal phosphate)lysine modification. Cys412 is an active-site residue. The region spanning 658 to 814 (LRLIRQSSND…LKTYSPIKAI (157 aa)) is the MOSC domain.

The protein belongs to the class-V pyridoxal-phosphate-dependent aminotransferase family. MOCOS subfamily. It depends on pyridoxal 5'-phosphate as a cofactor.

The catalysed reaction is Mo-molybdopterin + L-cysteine + AH2 = thio-Mo-molybdopterin + L-alanine + A + H2O. Its pathway is cofactor biosynthesis; molybdopterin biosynthesis. In terms of biological role, sulfurates the molybdenum cofactor. Sulfation of molybdenum is essential for xanthine dehydrogenase (XDH) and aldehyde oxidase (ADO) enzymes in which molybdenum cofactor is liganded by 1 oxygen and 1 sulfur atom in active form. The chain is Molybdenum cofactor sulfurase from Bombyx mori (Silk moth).